Consider the following 758-residue polypeptide: Solute carrier family 26 member 6 (758 aa).

At 1 to 117 (MGLPDGSDQG…PQGLAYALLA (117 aa)) the chain is on the cytoplasmic side. The helical transmembrane segment at 118 to 138 (GLPPMFGLYSSFYPVFIYFLF) threads the bilayer. The Extracellular segment spans residues 139–187 (GTSRHISVGTFAVMSVMVGSVTESLTADKAFVQGLNATADDARVQVAYT). Residue Asn174 is glycosylated (N-linked (GlcNAc) asparagine). A helical transmembrane segment spans residues 188 to 208 (LSFLVGLFQVGLGLVHFGFVV). At 209–263 (TYLSEPLVRSYTTAASVQVLVSQLKYVFGIKLSSHSGPLSVIYTVLEVCAQLPET) the chain is on the cytoplasmic side. Residues 264-284 (VPGTVVTAIVAGVALVLVKLL) form a helical membrane-spanning segment. Residues 285-292 (NEKLHRRL) are Extracellular-facing. The chain crosses the membrane as a helical span at residues 293 to 313 (PLPIPGELLTLIGATGISYGV). At 314–340 (KLNDRFKVDVVGNITTGLIPPVAPKTE) the chain is on the cytoplasmic side. A helical membrane pass occupies residues 341 to 361 (LFATLVGNAFAIAVVGFAIAI). The Extracellular portion of the chain corresponds to 362–380 (SLGKIFALRHGYRVDSNQE). The chain crosses the membrane as a helical span at residues 381 to 401 (LVALGLSNLIGGFFQCFPVSC). Residues 402–417 (SMSRSLVQESTGGNTQ) lie on the Cytoplasmic side of the membrane. Residues 418–438 (VAGAVSSLFILLIIVKLGELF) traverse the membrane as a helical segment. The Extracellular segment spans residues 439–485 (RDLPKAVLAAVIIVNLKGMMKQFSDICSLWKANRVDLLIWLVTFVAT). Residues 486–506 (ILLNLDIGLAVSIVFSLLLVV) form a helical membrane-spanning segment. Residues 507–758 (VRMQLPHYSV…PKSPVLATKL (252 aa)) lie on the Cytoplasmic side of the membrane. Residues 531–741 (EYSGAKEVPG…ASVHDAVTFA (211 aa)) form the STAS domain. A disordered region spans residues 585–608 (EMKLKRMKKAKKSQKQDASSKISS). Ser751 is modified (phosphoserine).

In terms of assembly, interacts (via C-terminal domain) with PDZK1 (via C-terminal PDZ domain); the interaction induces chloride and oxalate exchange transport. Interacts with CFTR, SLC26A3 and NHERF1. Interacts with AHCYL1; the interaction increases SLC26A6 activity. N-glycosylated. Glycosylation at Asn-174 positively regulates its chloride oxalate exchanger activity. In terms of tissue distribution, expressed in kidney (at protein level). Expressed in spermatogenic cells. Expressed in intestine, kidney, testis, brain, muscle, heart, and stomach. Expressed in the submandibular and sublingual salivary glands. Highly expressed in stomach, kidney, heart and small intestine, low in the lung, liver, testis, brain, skeletal muscle and colon. As to expression, expressed in the heart.

It localises to the cell membrane. Its subcellular location is the apical cell membrane. The protein localises to the cytoplasmic vesicle membrane. It is found in the microsome. The enzyme catalyses 2 hydrogencarbonate(in) + chloride(out) = 2 hydrogencarbonate(out) + chloride(in). The catalysed reaction is oxalate(in) + chloride(out) = oxalate(out) + chloride(in). It catalyses the reaction oxalate(in) + formate(out) = oxalate(out) + formate(in). It carries out the reaction oxalate(in) + sulfate(out) = oxalate(out) + sulfate(in). The enzyme catalyses formate(in) + chloride(out) = formate(out) + chloride(in). The catalysed reaction is sulfate(in) = sulfate(out). Its activity is regulated as follows. Apical membrane chloride-bicarbonate exchange activity of the pancreatic duct is inhibited by 4,4'-diisothiocyanatostilbene-2,2'-disulfonic acid (DIDS). Oxalate secretion in the duodenum and chloride-formate exchange activity is inhibited by DIDS. With respect to regulation, chloride-formate exchange activity and transcellular sulfate absorption is inhibited by 4,4'-diisothiocyanatostilbene-2,2'-disulfonic acid (DIDS). Its function is as follows. Apical membrane anion-exchanger with wide epithelial distribution that plays a role as a component of the pH buffering system for maintaining acid-base homeostasis. Acts as a versatile DIDS-sensitive inorganic and organic anion transporter that mediates the uptake of monovalent anions like chloride, bicarbonate, formate and hydroxyl ion and divalent anions like sulfate and oxalate. Functions in multiple exchange modes involving pairs of these anions, which include chloride-bicarbonate, chloride-oxalate, oxalate-formate, oxalate-sulfate and chloride-formate exchange. Apical membrane chloride-bicarbonate exchanger that mediates luminal chloride absorption and bicarbonate secretion by the small intestinal brush border membrane and contributes to intracellular pH regulation in the duodenal upper villous epithelium during proton-coupled peptide absorption, possibly by providing a bicarbonate import pathway. Its association with carbonic anhydrase CA2 forms a bicarbonate transport metabolon; hence maximizes the local concentration of bicarbonate at the transporter site. Also mediates intestinal chloride absorption and oxalate secretion, thereby preventing hyperoxaluria and calcium oxalate urolithiasis. Transepithelial oxalate secretion, chloride-formate, chloride-oxalate and chloride-bicarbonate transport activities in the duodenum are inhibited by PKC activation in a calcium-independent manner. The apical membrane chloride-bicarbonate exchanger also provides a major route for fluid and bicarbonate secretion into the proximal tubules of the kidney as well as into the proximal part of the interlobular pancreatic ductal tree, where it mediates electrogenic chloride-bicarbonate exchange with a chloride-bicarbonate stoichiometry of 1:2, and hence will dilute and alkalinize protein-rich acinar secretion. Also mediates the transcellular sulfate absorption and oxalate secretion across the apical membrane in the duodenum and the formate ion efflux at the apical brush border of cells in the proximal tubules of kidney. Plays a role in sperm capacitation by increasing intracellular pH. Mediates electrogenic chloride-bicarbonate exchange with a chloride-bicarbonate stoichiometry of 1:2. Also mediates exchange of chloride-formate and chloride-oxalate ions. Mediates transcellular sulfate absorption. This Mus musculus (Mouse) protein is Solute carrier family 26 member 6.